Here is a 504-residue protein sequence, read N- to C-terminus: 13S globulin seed storage protein 2 (504 aa).

A signal peptide spans 1 to 20; sequence MSTKLILSFSLCLMVLSCSA. Disulfide bonds link cysteine 46–cysteine 79 and cysteine 122–cysteine 320. Positions 51 to 265 constitute a Cupin type-1 1 domain; sequence LTASEPSRRV…FRDVDRETIS (215 aa). 3 disordered regions span residues 128–158, 214–237, and 289–314; these read SDSE…GDQH, GQSQ…DDEA, and QDFE…RSNG. Basic and acidic residues-rich tracts occupy residues 144–158 and 218–231; these read RQSE…GDQH and RETR…QSRE. The 150-residue stretch at 326 to 475 folds into the Cupin type-1 2 domain; it reads RNFNTPTNTY…SYDISTKEAY (150 aa).

The protein belongs to the 11S seed storage protein (globulins) family. Hexamer; each subunit is composed of an acidic and a basic chain derived from a single precursor and linked by a disulfide bond.

In terms of biological role, seed storage protein. This is 13S globulin seed storage protein 2 (FA18) from Fagopyrum esculentum (Common buckwheat).